We begin with the raw amino-acid sequence, 111 residues long: Large ribosomal subunit protein uL24 (111 aa).

The protein belongs to the universal ribosomal protein uL24 family. In terms of assembly, part of the 50S ribosomal subunit.

In terms of biological role, one of two assembly initiator proteins, it binds directly to the 5'-end of the 23S rRNA, where it nucleates assembly of the 50S subunit. One of the proteins that surrounds the polypeptide exit tunnel on the outside of the subunit. This is Large ribosomal subunit protein uL24 from Chlamydia muridarum (strain MoPn / Nigg).